An 82-amino-acid chain; its full sequence is MKTSVVFVIAGLALLSVACYASELKEQSSINEVLSTIFHFEQPEERDCLGFMRKCIPDNDKCCRPNLVCSRTHKWCKYVFGK.

A signal peptide spans 1 to 21 (MKTSVVFVIAGLALLSVACYA). Positions 22–46 (SELKEQSSINEVLSTIFHFEQPEER) are excised as a propeptide. 3 cysteine pairs are disulfide-bonded: Cys-48/Cys-63, Cys-55/Cys-69, and Cys-62/Cys-76. The residue at position 80 (Phe-80) is a Phenylalanine amide.

Belongs to the neurotoxin 10 (Hwtx-1) family. 08 (Gtx1-15) subfamily. As to expression, expressed by the venom gland.

The protein localises to the secreted. Potent voltage-gated sodium channel blocker. Potently inhibits the voltage-gated sodium channels Nav1.7/SCN9A (IC(50)=0.58-10 nM). Shows a moderate activity on Nav1.1/SCN1A (IC(50)=6 nM), Nav1.2/SCN2A (IC(50)=5-128 nM), Nav1.3/SCN3A (IC(50)=20.3-170 nM), and Nav1.6/SCN8A (IC(50)=17-20.1 nM). Shows an unclear inhibition of Nav1.4/SCN4A (IC(50)=200 nM to &gt;10 uM), Nav1.5/SCN5A (IC(50)=140 nM to &gt;10 uM) and Nav1.8/SCN10A (IC(50)=68-12200 nM). Weakly blocks the low voltage-gated calcium channels Cav3.1/CACNA1G (30% inhibition of the peak current by 9.8 nM of the toxin). It shows moderate affinity for lipid bilayers. This Grammostola rosea (Chilean rose tarantula) protein is Toxin GTx1-15.